Consider the following 244-residue polypeptide: Isoprenyl transferase (244 aa).

The active site involves aspartate 20. Position 20 (aspartate 20) interacts with Mg(2+). Residues 21 to 24, tryptophan 25, arginine 33, histidine 37, and 65 to 67 contribute to the substrate site; these read GNGR and SSE. Asparagine 68 (proton acceptor) is an active-site residue. Residues tryptophan 69, arginine 71, arginine 188, and 194–196 each bind substrate; that span reads RIS. Glutamate 207 serves as a coordination point for Mg(2+).

It belongs to the UPP synthase family. In terms of assembly, homodimer. Requires Mg(2+) as cofactor.

In terms of biological role, catalyzes the condensation of isopentenyl diphosphate (IPP) with allylic pyrophosphates generating different type of terpenoids. The sequence is that of Isoprenyl transferase from Rhodopirellula baltica (strain DSM 10527 / NCIMB 13988 / SH1).